The sequence spans 436 residues: 3-ketoacyl-CoA thiolase (436 aa).

The active-site Acyl-thioester intermediate is the Cys-99. Active-site proton acceptor residues include His-392 and Cys-422.

This sequence belongs to the thiolase-like superfamily. Thiolase family. In terms of assembly, heterotetramer of two alpha chains (FadJ) and two beta chains (FadI).

The protein resides in the cytoplasm. The enzyme catalyses an acyl-CoA + acetyl-CoA = a 3-oxoacyl-CoA + CoA. Its pathway is lipid metabolism; fatty acid beta-oxidation. Its function is as follows. Catalyzes the final step of fatty acid oxidation in which acetyl-CoA is released and the CoA ester of a fatty acid two carbons shorter is formed. This Shewanella denitrificans (strain OS217 / ATCC BAA-1090 / DSM 15013) protein is 3-ketoacyl-CoA thiolase.